A 534-amino-acid polypeptide reads, in one-letter code: Cyclin-L1 (534 aa).

2 cyclin-like regions span residues 94 to 196 (ELIQ…RVLK) and 209 to 293 (KIIV…KILQ). The disordered stretch occupies residues 327–534 (LPEGAPVLDN…DHPGHSRHRR (208 aa)). Residues 389 to 399 (KGRESRSRSGS) are compositionally biased toward basic and acidic residues. 2 stretches are compositionally biased toward low complexity: residues 400–412 (RDQS…SRSA) and 437–453 (RSGS…TYKS). The segment at 400–436 (RDQSYSRSPSRSASPKHRKSESYSTSSGSKSHSRSRS) is RS. Residues 468–485 (SAHKARKSRSRSSSRSRS) show a composition bias toward basic residues. Over residues 486–495 (RSRERSDHSG) the composition is skewed to basic and acidic residues. Over residues 496–511 (KYKKKSHYYRNHRHER) the composition is skewed to basic residues. The span at 512–528 (SRSYERASHRYDRDHPG) shows a compositional bias: basic and acidic residues.

The protein belongs to the cyclin family. Cyclin L subfamily.

Its subcellular location is the nucleus speckle. The protein resides in the nucleus. The protein localises to the nucleoplasm. Functionally, involved in pre-mRNA splicing. This Gallus gallus (Chicken) protein is Cyclin-L1 (CCNL1).